We begin with the raw amino-acid sequence, 312 residues long: Aspartate carbamoyltransferase catalytic subunit (312 aa).

Positions 58 and 59 each coordinate carbamoyl phosphate. L-aspartate is bound at residue Lys86. Positions 108, 136, and 139 each coordinate carbamoyl phosphate. L-aspartate contacts are provided by Arg169 and Arg223. Carbamoyl phosphate is bound by residues Gly264 and Pro265.

It belongs to the aspartate/ornithine carbamoyltransferase superfamily. ATCase family. As to quaternary structure, heterododecamer (2C3:3R2) of six catalytic PyrB chains organized as two trimers (C3), and six regulatory PyrI chains organized as three dimers (R2).

The enzyme catalyses carbamoyl phosphate + L-aspartate = N-carbamoyl-L-aspartate + phosphate + H(+). It functions in the pathway pyrimidine metabolism; UMP biosynthesis via de novo pathway; (S)-dihydroorotate from bicarbonate: step 2/3. Catalyzes the condensation of carbamoyl phosphate and aspartate to form carbamoyl aspartate and inorganic phosphate, the committed step in the de novo pyrimidine nucleotide biosynthesis pathway. This Endomicrobium trichonymphae protein is Aspartate carbamoyltransferase catalytic subunit.